Consider the following 381-residue polypeptide: Peptidoglycan transport system permease protein YejE (381 aa).

A run of 5 helical transmembrane segments spans residues 38–58 (YWSFWLFLILFFLSLIAEFIA), 183–203 (VLFGLTLTIASALVGVTAGAI), 230–250 (ILLIIAAILPPGFFVLLGIML), 292–312 (LLPNAMVATLTFLPFILSGSI), and 347–367 (WLGLTAFFTMSIMLSLLIFVG). The 193-residue stretch at 179 to 371 (FRISVLFGLT…LLIFVGEAVR (193 aa)) folds into the ABC transmembrane type-1 domain.

This sequence belongs to the binding-protein-dependent transport system permease family. As to quaternary structure, the complex is composed of one ATP-binding protein (YejF), two transmembrane proteins (YejB and YejE) and a solute-binding protein (YepA or YejA).

The protein localises to the cell inner membrane. Its function is as follows. Part of the ABC transporter complex YejBEF-YepA involved in the uptake of muropeptides, the breakdown products of cell wall peptidoglycan. The import of muropeptides into the cell enables peptidoglycan recycling, which is vital for cell wall integrity in this bacterium. Is also probably part of the ABC transporter complex YejABEF, which is likely involved in broad-spectrum peptide import. Responsible for the translocation of the substrate across the membrane. This chain is Peptidoglycan transport system permease protein YejE, found in Agrobacterium fabrum (strain C58 / ATCC 33970) (Agrobacterium tumefaciens (strain C58)).